Consider the following 376-residue polypeptide: Cyclin-D3-1 (376 aa).

A disordered region spans residues 298-376; that stretch reads KRKSHDSSSS…HLPWAIVATP (79 aa). The segment covering 321 to 349 has biased composition (low complexity); the sequence is NSDESSNDSWSASSCNPPTSSSSPQQQPP. Over residues 354 to 363 the composition is skewed to basic and acidic residues; that stretch reads RGAEENEKKK.

This sequence belongs to the cyclin family. Cyclin D subfamily. Interacts with the C-terminal domain of CDKA-1. Interacts with KRP1/ICK1. Interacts with KRP6. In terms of processing, phosphorylated. As to expression, highly expressed in roots and at lower levels in leaves and flowers. Expressed in vegetative shoot meristem and inflorescence.

Involved in the control of the cell cycle at the G1/S (start) transition. Activates the G1/S phase transition in response to cytokinin hormone signal, but declines in response to sucrose starvation leading to G1 arrest. Involved in the induction of mitotic cell division. Plays an important role in the switch from cell proliferation to the final stages of differentiation during plant development. May not be involved in the activation of cell cycle in the root apical meristem (RAM) in the early phase of seed germination. Promotes divisions in the guard cells (GCs) after the guard mother cells (GMC) symmetric division. The polypeptide is Cyclin-D3-1 (CYCD3-1) (Arabidopsis thaliana (Mouse-ear cress)).